The primary structure comprises 291 residues: Shikimate dehydrogenase (NADP(+)) (291 aa).

Residues 18 to 20 and Thr70 each bind shikimate; that span reads SLS. Lys74 acts as the Proton acceptor in catalysis. Residues Asn95 and Asp110 each coordinate shikimate. Residues 134–138 and Val228 contribute to the NADP(+) site; that span reads GAGGA. Tyr230 serves as a coordination point for shikimate. Position 251 (Gly251) interacts with NADP(+).

This sequence belongs to the shikimate dehydrogenase family. As to quaternary structure, homodimer.

It catalyses the reaction shikimate + NADP(+) = 3-dehydroshikimate + NADPH + H(+). Its pathway is metabolic intermediate biosynthesis; chorismate biosynthesis; chorismate from D-erythrose 4-phosphate and phosphoenolpyruvate: step 4/7. Functionally, involved in the biosynthesis of the chorismate, which leads to the biosynthesis of aromatic amino acids. Catalyzes the reversible NADPH linked reduction of 3-dehydroshikimate (DHSA) to yield shikimate (SA). The protein is Shikimate dehydrogenase (NADP(+)) of Streptomyces avermitilis (strain ATCC 31267 / DSM 46492 / JCM 5070 / NBRC 14893 / NCIMB 12804 / NRRL 8165 / MA-4680).